Consider the following 370-residue polypeptide: 3-dehydroquinate synthase (370 aa).

NAD(+) contacts are provided by residues 107–111, 131–132, Lys144, and Lys153; these read GVIGD and TS. Zn(2+)-binding residues include Glu186, His249, and His267.

It belongs to the sugar phosphate cyclases superfamily. Dehydroquinate synthase family. Co(2+) is required as a cofactor. The cofactor is Zn(2+). Requires NAD(+) as cofactor.

It localises to the cytoplasm. It carries out the reaction 7-phospho-2-dehydro-3-deoxy-D-arabino-heptonate = 3-dehydroquinate + phosphate. It participates in metabolic intermediate biosynthesis; chorismate biosynthesis; chorismate from D-erythrose 4-phosphate and phosphoenolpyruvate: step 2/7. In terms of biological role, catalyzes the conversion of 3-deoxy-D-arabino-heptulosonate 7-phosphate (DAHP) to dehydroquinate (DHQ). This Ruegeria pomeroyi (strain ATCC 700808 / DSM 15171 / DSS-3) (Silicibacter pomeroyi) protein is 3-dehydroquinate synthase.